The primary structure comprises 1168 residues: Zinc finger CCHC domain-containing protein 2 (1168 aa).

Disordered stretches follow at residues 1–87, 209–242, 561–693, and 932–978; these read MLRM…GGHA, EGSRGSVEDEPGGDDEQDAEKDGPGPEGGGCAKL, KRSL…LGTE, and ATSA…SDST. The span at 43-66 shows a compositional bias: pro residues; the sequence is PPPPPPTGLPRGPPPPPPSPPRGL. Low complexity predominate over residues 67–78; that stretch reads EPPVASGPTAGA. Positions 216–227 are enriched in acidic residues; that stretch reads EDEPGGDDEQDA. The span at 233–242 shows a compositional bias: gly residues; that stretch reads GPEGGGCAKL. The span at 574 to 588 shows a compositional bias: basic and acidic residues; that stretch reads PQVEKEKIKKTENRL. A compositionally biased stretch (low complexity) spans 626 to 635; it reads SSESYSSPSS. Residues 636–655 are compositionally biased toward basic and acidic residues; it reads PRHDGRESLESEEEKDRDTD. A compositionally biased stretch (polar residues) spans 932 to 949; the sequence is ATSAQPASTGISPAQSTV. Residues 951-965 show a composition bias toward pro residues; the sequence is PAVPTHTPGPAPSPS. The span at 966–978 shows a compositional bias: polar residues; that stretch reads PALTHSTAQSDST. The segment at 1121-1138 adopts a CCHC-type zinc-finger fold; the sequence is VSCYNCGVSGHYAQDCKQ.

This Rattus norvegicus (Rat) protein is Zinc finger CCHC domain-containing protein 2 (Zcchc2).